The sequence spans 389 residues: MLSLRVPLAPITDPQQLQLSPLKGLSLVDKENTPPALSGTRVLASKTARRIFQEPTEPKTKAAAPGVEDEPLLRENPRRFVIFPIEYHDIWQMYKKAEASFWTAEEVDLSKDIQHWESLKPEERYFISHVLAFFAASDGIVNENLVERFSQEVQITEARCFYGFQIAMENIHSEMYSLLIDTYIKDPKEREFLFNAIETMPCVKKKADWALRWIGDKEATYGERVVAFAAVEGIFFSGSFASIFWLKKRGLMPGLTFSNELISRDEGLHCDFACLMFKHLVHKPSEERVREIIINAVRIEQEFLTEALPVKLIGMNCTLMKQYIEFVADRLMLELGFSKVFRVENPFDFMENISLEGKTNFFEKRVGEYQRMGVMSSPTENSFTLDADF.

Residue serine 20 is modified to Phosphoserine. Threonine 33 is subject to Phosphothreonine. Residues 49 to 51 carry the Cy motif; it reads RRI. Fe cation contacts are provided by aspartate 138, glutamate 169, and histidine 172. Tyrosine 176 is an active-site residue. Positions 232, 266, and 269 each coordinate Fe cation.

The protein belongs to the ribonucleoside diphosphate reductase small chain family. In terms of assembly, heterodimer of a large and a small subunit. Interacts (via Cy motif and when phosphorylated at Thr-33) with CCNF; the interaction occurs exclusively in G2 and early M. It depends on Fe cation as a cofactor. Post-translationally, phosphorylation on Ser-20 relieves the inhibitory effect on Wnt signaling. Phosphorylated on Thr-33 by CDK1 and CDK2; predominantly in G2 and M phase. In terms of processing, ubiquitinated by the SCF(CCNF) E3 ubiquitin-protein ligase complex; leading to its degradation by the proteasome.

The protein localises to the cytoplasm. It localises to the nucleus. The catalysed reaction is a 2'-deoxyribonucleoside 5'-diphosphate + [thioredoxin]-disulfide + H2O = a ribonucleoside 5'-diphosphate + [thioredoxin]-dithiol. Provides the precursors necessary for DNA synthesis. Catalyzes the biosynthesis of deoxyribonucleotides from the corresponding ribonucleotides. Inhibits Wnt signaling. This Homo sapiens (Human) protein is Ribonucleoside-diphosphate reductase subunit M2 (RRM2).